The primary structure comprises 241 residues: Probable FKBP-type peptidyl-prolyl cis-trans isomerase (241 aa).

One can recognise a PPIase FKBP-type domain in the interval 150 to 241; the sequence is TDTVKVHYTG…VLDVNPKSEK (92 aa).

Belongs to the FKBP-type PPIase family.

It carries out the reaction [protein]-peptidylproline (omega=180) = [protein]-peptidylproline (omega=0). In terms of biological role, PPIases accelerate the folding of proteins. It catalyzes the cis-trans isomerization of proline imidic peptide bonds in oligopeptides. The chain is Probable FKBP-type peptidyl-prolyl cis-trans isomerase from Haemophilus influenzae (strain ATCC 51907 / DSM 11121 / KW20 / Rd).